Reading from the N-terminus, the 917-residue chain is Protein FAN (917 aa).

The GRAM domain maps to 176–247 (RLARTSFDKN…QDVRRIYKRR (72 aa)). The BEACH-type PH domain maps to 189 to 286 (NISEKLHMEC…DRDDLYFYIA (98 aa)). The 286-residue stretch at 290–575 (EHHVAEHTAE…QLFVTPHPRR (286 aa)) folds into the BEACH domain. 6 WD repeats span residues 628–658 (IHKE…KMFS), 670–700 (FSNM…YFYS), 712–740 (GHDD…KVWS), 761–791 (EHDV…NIWD), 803–833 (CHSG…NVID), and 884–914 (GHTG…IFWK).

In terms of tissue distribution, ubiquitous.

Its function is as follows. Couples the p55 TNF-receptor (TNF-R55 / TNFR1) to neutral sphingomyelinase (N-SMASE). Specifically binds to the N-smase activation domain of TNF-R55. May regulate ceramide production by N-SMASE. This is Protein FAN (NSMAF) from Homo sapiens (Human).